Reading from the N-terminus, the 216-residue chain is 3-keto-L-gulonate-6-phosphate decarboxylase UlaD (216 aa).

Asp-11 contacts substrate. Positions 33 and 62 each coordinate Mg(2+). Arg-192 contributes to the substrate binding site.

The protein belongs to the HPS/KGPDC family. KGPDC subfamily. As to quaternary structure, homodimer. The cofactor is Mg(2+).

It catalyses the reaction 3-dehydro-L-gulonate 6-phosphate + H(+) = L-xylulose 5-phosphate + CO2. The protein operates within cofactor degradation; L-ascorbate degradation; D-xylulose 5-phosphate from L-ascorbate: step 2/4. Its function is as follows. Catalyzes the decarboxylation of 3-keto-L-gulonate-6-P into L-xylulose-5-P. Is involved in the anaerobic L-ascorbate utilization. The chain is 3-keto-L-gulonate-6-phosphate decarboxylase UlaD from Escherichia coli O127:H6 (strain E2348/69 / EPEC).